A 218-amino-acid chain; its full sequence is Large ribosomal subunit protein uL1 (218 aa).

It belongs to the universal ribosomal protein uL1 family. Part of the 50S ribosomal subunit.

Functionally, binds directly to 23S rRNA. Probably involved in E site tRNA release. In terms of biological role, protein L1 is also a translational repressor protein, it controls the translation of its operon by binding to its mRNA. This chain is Large ribosomal subunit protein uL1, found in Metallosphaera sedula (strain ATCC 51363 / DSM 5348 / JCM 9185 / NBRC 15509 / TH2).